We begin with the raw amino-acid sequence, 385 residues long: ELAV-like protein 4 (385 aa).

Positions threonine 12–aspartate 48 are disordered. Over residues serine 18 to asparagine 33 the composition is skewed to low complexity. Polar residues predominate over residues arginine 34–aspartate 48. A Phosphoserine modification is found at serine 38. 2 consecutive RRM domains span residues threonine 51 to proline 129 and alanine 137 to asparagine 217. Serine 233 carries the post-translational modification Phosphoserine. Arginine 248 is subject to Asymmetric dimethylarginine; by CARM1; alternate. The residue at position 248 (arginine 248) is an Omega-N-methylarginine; by CARM1; alternate. The 79-residue stretch at tryptophan 302–asparagine 380 folds into the RRM 3 domain.

The protein belongs to the RRM elav family. As to quaternary structure, component of a TAU mRNP complex, at least composed of IGF2BP1, ELAVL4 and G3BP. Associates with the EIF4F cap-binding complex, composed of EIF4G, EIF4A, EIF4E and PABP. Within the EIF4F cap-binding complex, interacts with EIF4A. Interacts with SMN (via Tudor domain) in an RNA-independent manner; the interaction is required for localization of ELAVL4 to RNA granules. Interacts with MAP1 light chain LC1 (via C-terminus); the interaction contributes to the association of ELAVL4 with microtubules. Interacts with MAP1 light chain LC2. Methylated by CARM1, which leads to reduced RNA-binding activity and enhanced interaction with SMN. Methylation at Arg-248 by CARM1 weakens protective binding to the 3'UTR of CDKN1A mRNA and down-regulates CDKN1A protein expression, thereby maintaining cells in a proliferative state. Methylation is inhibited by NGF, which facilitates neurite outgrowth. In terms of tissue distribution, expressed in pancreatic beta cells (at protein level). Expressed in the brain.

The protein localises to the cytoplasm. It localises to the perikaryon. It is found in the cell projection. Its subcellular location is the dendrite. The protein resides in the axon. The protein localises to the growth cone. Its function is as follows. RNA-binding protein that is involved in the post-transcriptional regulation of mRNAs. Plays a role in the regulation of mRNA stability, alternative splicing and translation. Binds to AU-rich element (ARE) sequences in the 3' untranslated region (UTR) of target mRNAs, including GAP43, VEGF, FOS, CDKN1A and ACHE mRNA. Many of the target mRNAs are coding for RNA-binding proteins, transcription factors and proteins involved in RNA processing and/or neuronal development and function. By binding to the mRNA 3'UTR, decreases mRNA deadenylation and thereby contributes to the stabilization of mRNA molecules and their protection from decay. Also binds to the polyadenylated (poly(A)) tail in the 3'UTR of mRNA, thereby increasing its affinity for mRNA binding. Mainly plays a role in neuron-specific RNA processing by stabilization of mRNAs such as GAP43, ACHE and mRNAs of other neuronal proteins, thereby contributing to the differentiation of neural progenitor cells, nervous system development, learning and memory mechanisms. Involved in the negative regulation of the proliferative activity of neuronal stem cells and in the positive regulation of neuronal differentiation of neural progenitor cells. Promotes neuronal differentiation of neural stem/progenitor cells in the adult subventricular zone of the hippocampus by binding to and stabilizing SATB1 mRNA. Binds and stabilizes MSI1 mRNA in neural stem cells. Exhibits increased binding to ACHE mRNA during neuronal differentiation, thereby stabilizing ACHE mRNA and enhancing its expression. Protects CDKN1A mRNA from decay by binding to its 3'-UTR. May bind to APP and BACE1 mRNAS and the BACE1AS lncRNA and enhance their stabilization. Plays a role in neurite outgrowth and in the establishment and maturation of dendritic arbors, thereby contributing to neocortical and hippocampal circuitry function. Stabilizes GAP43 mRNA and protects it from decay during postembryonic development in the brain. By promoting the stabilization of GAP43 mRNA, plays a role in NGF-mediated neurite outgrowth. Binds to BDNF long 3'UTR mRNA, thereby leading to its stabilization and increased dendritic translation after activation of PKC. By increasing translation of BDNF after nerve injury, may contribute to nerve regeneration. Acts as a stabilizing factor by binding to the 3'UTR of NOVA1 mRNA, thereby increasing its translation and enhancing its functional activity in neuron-specific splicing. Stimulates translation of mRNA in a poly(A)- and cap-dependent manner, possibly by associating with the EIF4F cap-binding complex. May also negatively regulate translation by binding to the 5'UTR of Ins2 mRNA, thereby repressing its translation. Upon glucose stimulation, Ins2 mRNA is released from ELAVL4 and translational inhibition is abolished. Also plays a role in the regulation of alternative splicing. May regulate alternative splicing of CALCA pre-mRNA into Calcitonin and Calcitonin gene-related peptide 1 (CGRP) by competing with splicing regulator TIAR for binding to U-rich intronic sequences of CALCA pre-mRNA. This Homo sapiens (Human) protein is ELAV-like protein 4 (ELAVL4).